The primary structure comprises 132 residues: Small ribosomal subunit protein uS8 (132 aa).

Belongs to the universal ribosomal protein uS8 family. As to quaternary structure, part of the 30S ribosomal subunit. Contacts proteins S5 and S12.

In terms of biological role, one of the primary rRNA binding proteins, it binds directly to 16S rRNA central domain where it helps coordinate assembly of the platform of the 30S subunit. The sequence is that of Small ribosomal subunit protein uS8 from Nitrobacter hamburgensis (strain DSM 10229 / NCIMB 13809 / X14).